The primary structure comprises 500 residues: Probable malate:quinone oxidoreductase (500 aa).

It belongs to the MQO family. Requires FAD as cofactor.

It carries out the reaction (S)-malate + a quinone = a quinol + oxaloacetate. It functions in the pathway carbohydrate metabolism; tricarboxylic acid cycle; oxaloacetate from (S)-malate (quinone route): step 1/1. This Corynebacterium glutamicum (strain R) protein is Probable malate:quinone oxidoreductase.